The primary structure comprises 292 residues: Glutamate racemase (292 aa).

Residues 10–11 and 42–43 each bind substrate; these read DS and YG. Cys-73 functions as the Proton donor/acceptor in the catalytic mechanism. 74 to 75 contacts substrate; sequence NS. Catalysis depends on Cys-186, which acts as the Proton donor/acceptor. Residue 187 to 188 coordinates substrate; sequence TH.

The protein belongs to the aspartate/glutamate racemases family.

It catalyses the reaction L-glutamate = D-glutamate. It participates in cell wall biogenesis; peptidoglycan biosynthesis. Provides the (R)-glutamate required for cell wall biosynthesis. The polypeptide is Glutamate racemase (Beutenbergia cavernae (strain ATCC BAA-8 / DSM 12333 / CCUG 43141 / JCM 11478 / NBRC 16432 / NCIMB 13614 / HKI 0122)).